Consider the following 239-residue polypeptide: Large ribosomal subunit protein uL1 (239 aa).

Belongs to the universal ribosomal protein uL1 family. Part of the 50S ribosomal subunit.

Functionally, binds directly to 23S rRNA. The L1 stalk is quite mobile in the ribosome, and is involved in E site tRNA release. Its function is as follows. Protein L1 is also a translational repressor protein, it controls the translation of the L11 operon by binding to its mRNA. The chain is Large ribosomal subunit protein uL1 from Rhodococcus erythropolis (strain PR4 / NBRC 100887).